A 444-amino-acid chain; its full sequence is Methylenetetrahydrofolate--tRNA-(uracil-5-)-methyltransferase TrmFO (444 aa).

10–15 (GAGLAG) provides a ligand contact to FAD.

This sequence belongs to the MnmG family. TrmFO subfamily. It depends on FAD as a cofactor.

It localises to the cytoplasm. The enzyme catalyses uridine(54) in tRNA + (6R)-5,10-methylene-5,6,7,8-tetrahydrofolate + NADH + H(+) = 5-methyluridine(54) in tRNA + (6S)-5,6,7,8-tetrahydrofolate + NAD(+). It catalyses the reaction uridine(54) in tRNA + (6R)-5,10-methylene-5,6,7,8-tetrahydrofolate + NADPH + H(+) = 5-methyluridine(54) in tRNA + (6S)-5,6,7,8-tetrahydrofolate + NADP(+). In terms of biological role, catalyzes the folate-dependent formation of 5-methyl-uridine at position 54 (M-5-U54) in all tRNAs. This Streptococcus agalactiae serotype III (strain NEM316) protein is Methylenetetrahydrofolate--tRNA-(uracil-5-)-methyltransferase TrmFO.